The primary structure comprises 453 residues: Insulinoma-associated protein 1b (453 aa).

The interval 1-20 (MPKGFLVKRNKKAALVSYRI) is SNAG domain. The interval 140-179 (NSNRSGTASGAHAPAIQTGAKRPSADAAERKVSSKSAKKP) is disordered. The span at 162–171 (PSADAAERKV) shows a compositional bias: basic and acidic residues. The C2H2-type 1 zinc-finger motif lies at 252-274 (YRCPECEKVFSCPANLASHRRWH). The interval 298-318 (AEFPSDRDTPSPGLSESGSED) is disordered. 3 consecutive C2H2-type zinc fingers follow at residues 321 to 343 (YDCQ…ILGH), 383 to 406 (LTCP…RLLH), and 412 to 435 (FPCK…NKCH).

Belongs to the INSM1 family.

Its subcellular location is the nucleus. Functionally, may act as a transcriptional regulator. May play a role in neurogenesis and neuroendocrine cell differentiation during embryonic development. The sequence is that of Insulinoma-associated protein 1b (insm1b) from Danio rerio (Zebrafish).